The primary structure comprises 368 residues: tRNA-specific 2-thiouridylase MnmA (368 aa).

ATP is bound by residues 11–18 (GMSGGVDS) and Met37. Residues 97–99 (NPD) are interaction with target base in tRNA. Catalysis depends on Cys102, which acts as the Nucleophile. A disulfide bond links Cys102 and Cys199. Gly127 is an ATP binding site. The tract at residues 149–151 (KDQ) is interaction with tRNA. The active-site Cysteine persulfide intermediate is the Cys199. An interaction with tRNA region spans residues 311–312 (RY).

The protein belongs to the MnmA/TRMU family. In terms of assembly, interacts with TusE.

It is found in the cytoplasm. It catalyses the reaction S-sulfanyl-L-cysteinyl-[protein] + uridine(34) in tRNA + AH2 + ATP = 2-thiouridine(34) in tRNA + L-cysteinyl-[protein] + A + AMP + diphosphate + H(+). Catalyzes the 2-thiolation of uridine at the wobble position (U34) of tRNA(Lys), tRNA(Glu) and tRNA(Gln), leading to the formation of s(2)U34, the first step of tRNA-mnm(5)s(2)U34 synthesis. Sulfur is provided by IscS, via a sulfur-relay system. Binds ATP and its substrate tRNAs. This Salmonella typhimurium (strain LT2 / SGSC1412 / ATCC 700720) protein is tRNA-specific 2-thiouridylase MnmA.